A 623-amino-acid polypeptide reads, in one-letter code: Chaperone protein HtpG (623 aa).

Residues 1–336 (MSMKGQETRG…SNDLPLNVSR (336 aa)) form an a; substrate-binding region. A b region spans residues 337 to 551 (EILQDSRVTQ…ADEMSTQMAK (215 aa)). Positions 552-623 (LFAAAGQEAP…IRRMNKLLSA (72 aa)) are c.

It belongs to the heat shock protein 90 family. In terms of assembly, homodimer.

Its subcellular location is the cytoplasm. In terms of biological role, molecular chaperone. Has ATPase activity. The polypeptide is Chaperone protein HtpG (Serratia proteamaculans (strain 568)).